The following is a 715-amino-acid chain: Fatty acid oxidation complex subunit alpha (715 aa).

Residues 1–190 (MTTTSAFMLN…KAGLVDDVVP (190 aa)) form an enoyl-CoA hydratase region. The segment at 306–714 (GPLNSVGILG…FWTNGETDQG (409 aa)) is 3-hydroxyacyl-CoA dehydrogenase.

The protein in the N-terminal section; belongs to the enoyl-CoA hydratase/isomerase family. This sequence in the central section; belongs to the 3-hydroxyacyl-CoA dehydrogenase family. In terms of assembly, heterotetramer of two alpha chains (FadJ) and two beta chains (FadI).

The protein resides in the cytoplasm. The enzyme catalyses a (3S)-3-hydroxyacyl-CoA = a (2E)-enoyl-CoA + H2O. The catalysed reaction is a 4-saturated-(3S)-3-hydroxyacyl-CoA = a (3E)-enoyl-CoA + H2O. It carries out the reaction a (3S)-3-hydroxyacyl-CoA + NAD(+) = a 3-oxoacyl-CoA + NADH + H(+). It catalyses the reaction (3S)-3-hydroxybutanoyl-CoA = (3R)-3-hydroxybutanoyl-CoA. The protein operates within lipid metabolism; fatty acid beta-oxidation. Catalyzes the formation of a hydroxyacyl-CoA by addition of water on enoyl-CoA. Also exhibits 3-hydroxyacyl-CoA epimerase and 3-hydroxyacyl-CoA dehydrogenase activities. The chain is Fatty acid oxidation complex subunit alpha from Salmonella paratyphi A (strain ATCC 9150 / SARB42).